The primary structure comprises 548 residues: Chaperonin GroEL (548 aa).

ATP is bound by residues 30 to 33 (TLGP), Lys51, 87 to 91 (DGTTT), Gly415, 479 to 481 (NAA), and Asp495.

It belongs to the chaperonin (HSP60) family. Forms a cylinder of 14 subunits composed of two heptameric rings stacked back-to-back. Interacts with the co-chaperonin GroES.

It is found in the cytoplasm. It carries out the reaction ATP + H2O + a folded polypeptide = ADP + phosphate + an unfolded polypeptide.. Together with its co-chaperonin GroES, plays an essential role in assisting protein folding. The GroEL-GroES system forms a nano-cage that allows encapsulation of the non-native substrate proteins and provides a physical environment optimized to promote and accelerate protein folding. This Klebsiella pneumoniae (strain 342) protein is Chaperonin GroEL.